Here is a 202-residue protein sequence, read N- to C-terminus: B-cell CLL/lymphoma 7 protein family member B (202 aa).

Positions 53–202 (DSKEKEKSKS…PAVPQTASES (150 aa)) are disordered. The segment covering 90–99 (ENSNQSSVSD) has biased composition (polar residues). The segment covering 107–123 (SSTNSSPSPQQSESLSP) has biased composition (low complexity). A phosphoserine mark is found at S114, S118, S120, S122, S127, S148, and S152.

This sequence belongs to the BCL7 family.

Functionally, positive regulator of apoptosis. Plays a role in the Wnt signaling pathway, negatively regulating the expression of Wnt signaling components CTNNB1 and HMGA1. Involved in cell cycle progression, maintenance of the nuclear structure and stem cell differentiation. May play a role in lung tumor development or progression. The protein is B-cell CLL/lymphoma 7 protein family member B (BCL7B) of Bos taurus (Bovine).